The following is a 109-amino-acid chain: Spermidine export protein MdtI (109 aa).

4 helical membrane-spanning segments follow: residues 6-26, 36-56, 64-84, and 88-108; these read WIHA…NVFL, VYGI…SQAV, AYAL…WVLF, and LNNK…LIKL.

The protein belongs to the drug/metabolite transporter (DMT) superfamily. Small multidrug resistance (SMR) (TC 2.A.7.1) family. MdtI subfamily. In terms of assembly, forms a complex with MdtJ.

The protein resides in the cell inner membrane. Catalyzes the excretion of spermidine. This chain is Spermidine export protein MdtI, found in Klebsiella pneumoniae (strain 342).